Reading from the N-terminus, the 387-residue chain is GTPase Obg (387 aa).

The 159-residue stretch at 1 to 159 (MKFLDEAKIY…MWVRLEMKLL (159 aa)) folds into the Obg domain. One can recognise an OBG-type G domain in the interval 160-334 (ADVGLVGMPN…LVYHVGGMVK (175 aa)). GTP contacts are provided by residues 166–173 (GMPNAGKS), 191–195 (FTTLQ), 213–216 (DIPG), 283–286 (SKAD), and 315–317 (SSA). Mg(2+) contacts are provided by Ser173 and Thr193. Positions 347 to 379 (LEDAPTRAGSKALRDEHAPSWQDDDDDDDDDDG) are disordered. Residues 368–379 (QDDDDDDDDDDG) show a composition bias toward acidic residues.

This sequence belongs to the TRAFAC class OBG-HflX-like GTPase superfamily. OBG GTPase family. As to quaternary structure, monomer. Requires Mg(2+) as cofactor.

The protein resides in the cytoplasm. An essential GTPase which binds GTP, GDP and possibly (p)ppGpp with moderate affinity, with high nucleotide exchange rates and a fairly low GTP hydrolysis rate. Plays a role in control of the cell cycle, stress response, ribosome biogenesis and in those bacteria that undergo differentiation, in morphogenesis control. The polypeptide is GTPase Obg (Magnetococcus marinus (strain ATCC BAA-1437 / JCM 17883 / MC-1)).